The chain runs to 393 residues: DNA-directed RNA polymerase subunit Rpo1C (393 aa).

This sequence belongs to the RNA polymerase beta' chain family. As to quaternary structure, part of the RNA polymerase complex.

The protein localises to the cytoplasm. The catalysed reaction is RNA(n) + a ribonucleoside 5'-triphosphate = RNA(n+1) + diphosphate. DNA-dependent RNA polymerase (RNAP) catalyzes the transcription of DNA into RNA using the four ribonucleoside triphosphates as substrates. Forms part of the jaw domain. This Thermococcus celer protein is DNA-directed RNA polymerase subunit Rpo1C.